Consider the following 750-residue polypeptide: Photosystem I P700 chlorophyll a apoprotein A1 (750 aa).

8 helical membrane-spanning segments follow: residues 70-93 (VFSA…FHGA), 156-179 (LYCT…FHYH), 195-219 (LNHH…HVSL), 291-309 (IAHH…GHMY), 346-369 (WHAQ…HHMY), 385-411 (LSLF…IFMV), 433-455 (AIIS…LYIH), and 531-549 (FLVH…LILL). Residues C573 and C582 each contribute to the [4Fe-4S] cluster site. 2 helical membrane passes run 589 to 610 (HVFL…HFSW) and 664 to 686 (LSAY…MFLF). A chlorophyll a'-binding site is contributed by H675. M683 and Y691 together coordinate chlorophyll a. Residue W692 participates in phylloquinone binding. Residues 724–744 (AVGVTHYLLGGIATTWAFFLA) form a helical membrane-spanning segment.

The protein belongs to the PsaA/PsaB family. As to quaternary structure, the PsaA/B heterodimer binds the P700 chlorophyll special pair and subsequent electron acceptors. PSI consists of a core antenna complex that captures photons, and an electron transfer chain that converts photonic excitation into a charge separation. The eukaryotic PSI reaction center is composed of at least 11 subunits. Requires P700 is a chlorophyll a/chlorophyll a' dimer, A0 is one or more chlorophyll a, A1 is one or both phylloquinones and FX is a shared 4Fe-4S iron-sulfur center. as cofactor.

Its subcellular location is the plastid. The protein resides in the chloroplast thylakoid membrane. It catalyses the reaction reduced [plastocyanin] + hnu + oxidized [2Fe-2S]-[ferredoxin] = oxidized [plastocyanin] + reduced [2Fe-2S]-[ferredoxin]. PsaA and PsaB bind P700, the primary electron donor of photosystem I (PSI), as well as the electron acceptors A0, A1 and FX. PSI is a plastocyanin-ferredoxin oxidoreductase, converting photonic excitation into a charge separation, which transfers an electron from the donor P700 chlorophyll pair to the spectroscopically characterized acceptors A0, A1, FX, FA and FB in turn. Oxidized P700 is reduced on the lumenal side of the thylakoid membrane by plastocyanin. The sequence is that of Photosystem I P700 chlorophyll a apoprotein A1 from Solanum bulbocastanum (Wild potato).